The chain runs to 325 residues: DNA-directed RNA polymerase subunit alpha (325 aa).

An alpha N-terminal domain (alpha-NTD) region spans residues 1–231; that stretch reads MQTSLLKPKI…DQLSVFAALE (231 aa). Positions 246-325 are alpha C-terminal domain (alpha-CTD); it reads IDPILLRPVD…ENWPPAGLDK (80 aa).

Belongs to the RNA polymerase alpha chain family. In terms of assembly, homodimer. The RNAP catalytic core consists of 2 alpha, 1 beta, 1 beta' and 1 omega subunit. When a sigma factor is associated with the core the holoenzyme is formed, which can initiate transcription.

It catalyses the reaction RNA(n) + a ribonucleoside 5'-triphosphate = RNA(n+1) + diphosphate. Functionally, DNA-dependent RNA polymerase catalyzes the transcription of DNA into RNA using the four ribonucleoside triphosphates as substrates. The protein is DNA-directed RNA polymerase subunit alpha of Burkholderia multivorans (strain ATCC 17616 / 249).